The primary structure comprises 487 residues: Cysteine--tRNA ligase (487 aa).

Residue Cys-27 participates in Zn(2+) binding. The 'HIGH' region signature appears at 29–39; sequence ATVQGLPHVGH. Residues 174 to 194 form a disordered region; that stretch reads IDDMQGAPDADPRGKKDPRDF. Over residues 183 to 194 the composition is skewed to basic and acidic residues; the sequence is ADPRGKKDPRDF. Residues Cys-225, His-250, and Glu-254 each contribute to the Zn(2+) site. A 'KMSKS' region motif is present at residues 281-285; it reads KMSKS. An ATP-binding site is contributed by Lys-284.

It belongs to the class-I aminoacyl-tRNA synthetase family. Monomer. The cofactor is Zn(2+).

The protein resides in the cytoplasm. The catalysed reaction is tRNA(Cys) + L-cysteine + ATP = L-cysteinyl-tRNA(Cys) + AMP + diphosphate. The sequence is that of Cysteine--tRNA ligase from Arthrobacter sp. (strain FB24).